The primary structure comprises 335 residues: NADH-quinone oxidoreductase subunit H (335 aa).

The next 8 membrane-spanning stretches (helical) occupy residues 11–31 (VILTVVRAIVVLLAVVVCGAL), 81–101 (MIFTLAPVVAMSALLIAFVVI), 114–134 (IGLLFFFAMAGLSVYAVLFAG), 154–174 (VSYEVFLGLALMGVVVQVGSF), 187–207 (LWFIIPQFFGFCTFFIAGVAV), 238–258 (FFVGEYIGIILISALLVTLFF), 270–290 (QVPFLWFALKTAFFIMLFILL), and 307–327 (WKFCLPLTLINLLVTAAVVLY).

Belongs to the complex I subunit 1 family. NDH-1 is composed of 13 different subunits. Subunits NuoA, H, J, K, L, M, N constitute the membrane sector of the complex.

The protein resides in the cell inner membrane. The enzyme catalyses a quinone + NADH + 5 H(+)(in) = a quinol + NAD(+) + 4 H(+)(out). In terms of biological role, NDH-1 shuttles electrons from NADH, via FMN and iron-sulfur (Fe-S) centers, to quinones in the respiratory chain. The immediate electron acceptor for the enzyme in this species is believed to be ubiquinone. Couples the redox reaction to proton translocation (for every two electrons transferred, four hydrogen ions are translocated across the cytoplasmic membrane), and thus conserves the redox energy in a proton gradient. This subunit may bind ubiquinone. The polypeptide is NADH-quinone oxidoreductase subunit H (Pseudomonas entomophila (strain L48)).